Here is a 315-residue protein sequence, read N- to C-terminus: Mycothiol acetyltransferase (315 aa).

2 N-acetyltransferase domains span residues 8 to 145 (VETS…LPLD) and 163 to 315 (VSLR…DATA). 1D-myo-inositol 2-(L-cysteinylamino)-2-deoxy-alpha-D-glucopyranoside is bound at residue Glu39. Residues 81–83 (LVV) and 89–94 (HHGVGT) contribute to the acetyl-CoA site. 1D-myo-inositol 2-(L-cysteinylamino)-2-deoxy-alpha-D-glucopyranoside contacts are provided by Glu190, Lys229, and Glu243. Residue 247–249 (LGV) participates in acetyl-CoA binding. 1D-myo-inositol 2-(L-cysteinylamino)-2-deoxy-alpha-D-glucopyranoside is bound at residue Tyr281. Residue 286–291 (NTVAIR) coordinates acetyl-CoA.

Belongs to the acetyltransferase family. MshD subfamily. Monomer.

It catalyses the reaction 1D-myo-inositol 2-(L-cysteinylamino)-2-deoxy-alpha-D-glucopyranoside + acetyl-CoA = mycothiol + CoA + H(+). Functionally, catalyzes the transfer of acetyl from acetyl-CoA to desacetylmycothiol (Cys-GlcN-Ins) to form mycothiol. The protein is Mycothiol acetyltransferase of Sanguibacter keddieii (strain ATCC 51767 / DSM 10542 / NCFB 3025 / ST-74).